The following is an 83-amino-acid chain: Protein YciN (83 aa).

This chain is Protein YciN (yciN), found in Escherichia coli O157:H7.